We begin with the raw amino-acid sequence, 456 residues long: 5-hydroxytryptamine receptor 3E (456 aa).

Positions 1–25 are cleaved as a signal peptide; that stretch reads MEGSWFHRKRFSFYLLLGFLLQGRG. Residues 26-248 lie on the Extracellular side of the membrane; that stretch reads VTFTINCSGF…FYVAIRRRPS (223 aa). Cysteines 162 and 176 form a disulfide. N175 carries N-linked (GlcNAc...) asparagine glycosylation. A helical transmembrane segment spans residues 249-269; that stretch reads LYVINLLVPSGFLVAIDALSF. Residues 270-282 lie on the Cytoplasmic side of the membrane; that stretch reads YLPVKSGNRVPFK. Residues 283–303 traverse the membrane as a helical segment; the sequence is ITLLLGYNVFLLMMSDLLPTS. Over 304-307 the chain is Extracellular; sequence GTPL. Residues 308–328 traverse the membrane as a helical segment; the sequence is IGVYFALCLSLMVGSLLETIF. The Cytoplasmic segment spans residues 329–433; that stretch reads ITHLLHVATT…WLQFSHAMDA (105 aa). Positions 401–432 are HA-stretch; determines single-channel conductance in 5-HT3 receptors; it reads TGGSEWTRAQREHEAQKQHSVELWLQFSHAMD. Residues 434-454 form a helical membrane-spanning segment; the sequence is MLFRLYLLFMASSIITVICLW. At 455-456 the chain is on the extracellular side; the sequence is NT.

It belongs to the ligand-gated ion channel (TC 1.A.9) family. 5-hydroxytryptamine receptor (TC 1.A.9.2) subfamily. HTR3E sub-subfamily. As to quaternary structure, forms homopentameric as well as heteropentameric serotonin-activated cation-selective channel complexes with HTR3A. The homomeric complex is not functional. Heteropentameric complexes display properties which resemble that of neuronal serotonin-activated channels in vivo. As to expression, expressed in adult colon and intestine.

Its subcellular location is the postsynaptic cell membrane. It localises to the cell membrane. The catalysed reaction is Na(+)(in) = Na(+)(out). The enzyme catalyses K(+)(in) = K(+)(out). It carries out the reaction Ca(2+)(in) = Ca(2+)(out). In terms of biological role, forms serotonin (5-hydroxytryptamine/5-HT3)-activated cation-selective channel complexes, which when activated cause fast, depolarizing responses in neurons. The sequence is that of 5-hydroxytryptamine receptor 3E from Homo sapiens (Human).